The following is a 170-amino-acid chain: Two-component response regulator ORR6 (170 aa).

The Response regulatory domain maps to 51–170; that stretch reads HVLAVDDSSV…DVSRLCSRIR (120 aa). Position 103 is a 4-aspartylphosphate (aspartate 103).

It belongs to the ARR family. Type-A subfamily. In terms of processing, two-component system major event consists of a His-to-Asp phosphorelay between a sensor histidine kinase (HK) and a response regulator (RR). In plants, the His-to-Asp phosphorelay involves an additional intermediate named Histidine-containing phosphotransfer protein (HPt). This multistep phosphorelay consists of a His-Asp-His-Asp sequential transfer of a phosphate group between first a His and an Asp of the HK protein, followed by the transfer to a conserved His of the HPt protein and finally the transfer to an Asp in the receiver domain of the RR protein. Expressed in roots, leaf blades, leaf sheaths, shoot apex, flowers and panicles.

Functions as a response regulator involved in His-to-Asp phosphorelay signal transduction system. Phosphorylation of the Asp residue in the receiver domain activates the ability of the protein to promote the transcription of target genes. Type-A response regulators seem to act as negative regulators of the cytokinin signaling. In Oryza sativa subsp. japonica (Rice), this protein is Two-component response regulator ORR6.